A 418-amino-acid chain; its full sequence is UDP-N-acetylglucosamine 1-carboxyvinyltransferase 1 (418 aa).

22 to 23 contributes to the phosphoenolpyruvate binding site; sequence KN. UDP-N-acetyl-alpha-D-glucosamine is bound at residue Arg-94. Residue Cys-118 is the Proton donor of the active site. Cys-118 bears the 2-(S-cysteinyl)pyruvic acid O-phosphothioketal mark. UDP-N-acetyl-alpha-D-glucosamine contacts are provided by residues 123–127, Asp-306, and Ile-328; that span reads RPIDL.

The protein belongs to the EPSP synthase family. MurA subfamily.

Its subcellular location is the cytoplasm. It carries out the reaction phosphoenolpyruvate + UDP-N-acetyl-alpha-D-glucosamine = UDP-N-acetyl-3-O-(1-carboxyvinyl)-alpha-D-glucosamine + phosphate. It participates in cell wall biogenesis; peptidoglycan biosynthesis. In terms of biological role, cell wall formation. Adds enolpyruvyl to UDP-N-acetylglucosamine. The chain is UDP-N-acetylglucosamine 1-carboxyvinyltransferase 1 from Clostridium acetobutylicum (strain ATCC 824 / DSM 792 / JCM 1419 / IAM 19013 / LMG 5710 / NBRC 13948 / NRRL B-527 / VKM B-1787 / 2291 / W).